The chain runs to 472 residues: Phenylalanine--tRNA ligase, mitochondrial (472 aa).

Substrate is bound by residues 157 to 160 (SAHQ), arginine 179, 186 to 188 (QHY), and 193 to 195 (QLE). Lysine 202 is subject to N6-acetyllysine. Substrate contacts are provided by glutamate 287 and phenylalanine 312. Residues 379–471 (SKYPAVFNDI…AVQLLGVEGR (93 aa)) enclose the FDX-ACB domain.

This sequence belongs to the class-II aminoacyl-tRNA synthetase family. Monomer. As to expression, mainly expressed in the Purkinje cell of cerebellum.

The protein localises to the mitochondrion matrix. It is found in the mitochondrion. It catalyses the reaction tRNA(Phe) + L-phenylalanine + ATP = L-phenylalanyl-tRNA(Phe) + AMP + diphosphate + H(+). Functionally, is responsible for the charging of tRNA(Phe) with phenylalanine in mitochondrial translation. To a lesser extent, also catalyzes direct attachment of m-Tyr (an oxidized version of Phe) to tRNA(Phe), thereby opening the way for delivery of the misacylated tRNA to the ribosome and incorporation of ROS-damaged amino acid into proteins. This is Phenylalanine--tRNA ligase, mitochondrial (Fars2) from Rattus norvegicus (Rat).